A 353-amino-acid polypeptide reads, in one-letter code: Farnesyl pyrophosphate synthase (353 aa).

K57, R60, and Q96 together coordinate isopentenyl diphosphate. At K57 the chain carries N6-(2-hydroxyisobutyryl)lysine; alternate. An N6-acetyllysine; alternate modification is found at K57. Mg(2+)-binding residues include D103 and D107. R112 contacts dimethylallyl diphosphate. R113 provides a ligand contact to isopentenyl diphosphate. Dimethylallyl diphosphate-binding residues include K200, T201, Q240, K257, and K266.

This sequence belongs to the FPP/GGPP synthase family. Homodimer. Interacts with RSAD2. Interacts with bovine leukemia virus (BLV) protein G4. Mg(2+) serves as cofactor.

The protein resides in the cytoplasm. It carries out the reaction isopentenyl diphosphate + dimethylallyl diphosphate = (2E)-geranyl diphosphate + diphosphate. The enzyme catalyses isopentenyl diphosphate + (2E)-geranyl diphosphate = (2E,6E)-farnesyl diphosphate + diphosphate. It participates in isoprenoid biosynthesis; farnesyl diphosphate biosynthesis; farnesyl diphosphate from geranyl diphosphate and isopentenyl diphosphate: step 1/1. Its pathway is isoprenoid biosynthesis; geranyl diphosphate biosynthesis; geranyl diphosphate from dimethylallyl diphosphate and isopentenyl diphosphate: step 1/1. Inactivated by interferon-induced RSAD2. This inactivation may result of disruption of lipid rafts at the plasma membrane, and thus have an antiviral effect since many enveloped viruses need lipid rafts to bud efficiently out of the cell. Functionally, key enzyme in isoprenoid biosynthesis which catalyzes the formation of farnesyl diphosphate (FPP), a precursor for several classes of essential metabolites including sterols, dolichols, carotenoids, and ubiquinones. FPP also serves as substrate for protein farnesylation and geranylgeranylation. Catalyzes the sequential condensation of isopentenyl pyrophosphate with the allylic pyrophosphates, dimethylallyl pyrophosphate, and then with the resultant geranylpyrophosphate to the ultimate product farnesyl pyrophosphate. This Bos taurus (Bovine) protein is Farnesyl pyrophosphate synthase (FDPS).